The following is a 638-amino-acid chain: Acetolactate synthase 1, chloroplastic (638 aa).

A compositionally biased stretch (low complexity) spans 1-19 (MATAAAASTALTGATTAAP). The segment at 1-23 (MATAAAASTALTGATTAAPKARR) is disordered. The N-terminal 39 residues, 1–39 (MATAAAASTALTGATTAAPKARRRAHLLATRRALAAPIR), are a transit peptide targeting the chloroplast. A thiamine diphosphate-binding site is contributed by E112. C132 and C278 are oxidised to a cystine. FAD contacts are provided by residues R214, 320 to 341 (HGTV…LGVR), and 363 to 382 (DIDP…ICAD). The tract at residues 455–535 (QHQMWAAQYY…VKVFVLNNQH (81 aa)) is thiamine pyrophosphate binding. Residues D506 and N533 each contribute to the Mg(2+) site.

It belongs to the TPP enzyme family. Mg(2+) serves as cofactor. Thiamine diphosphate is required as a cofactor.

The protein localises to the plastid. It localises to the chloroplast. It catalyses the reaction 2 pyruvate + H(+) = (2S)-2-acetolactate + CO2. It participates in amino-acid biosynthesis; L-isoleucine biosynthesis; L-isoleucine from 2-oxobutanoate: step 1/4. Its pathway is amino-acid biosynthesis; L-valine biosynthesis; L-valine from pyruvate: step 1/4. This is Acetolactate synthase 1, chloroplastic (ALS1) from Zea mays (Maize).